Consider the following 177-residue polypeptide: MSRIGKKPVDLPAGVSASVSGQTIEIKGPKGTRAFKATDDVTLTVEDNVVTVTPRGKSKRARQQWGMSRTMVANLVTGVSEGFKKELEIQGVGYRAAMTGNTLKLNLGLSHDVDYTPPAGVTVTAPKQTEIVVEGIDEQLVGQVAANIRQWRKPEPYKGKGIRYKGEFVFRKEGKKK.

This sequence belongs to the universal ribosomal protein uL6 family. Part of the 50S ribosomal subunit.

Functionally, this protein binds to the 23S rRNA, and is important in its secondary structure. It is located near the subunit interface in the base of the L7/L12 stalk, and near the tRNA binding site of the peptidyltransferase center. This chain is Large ribosomal subunit protein uL6, found in Roseobacter denitrificans (strain ATCC 33942 / OCh 114) (Erythrobacter sp. (strain OCh 114)).